The chain runs to 198 residues: Probable chemoreceptor glutamine deamidase CheD (198 aa).

It belongs to the CheD family.

The enzyme catalyses L-glutaminyl-[protein] + H2O = L-glutamyl-[protein] + NH4(+). Its function is as follows. Probably deamidates glutamine residues to glutamate on methyl-accepting chemotaxis receptors (MCPs), playing an important role in chemotaxis. This is Probable chemoreceptor glutamine deamidase CheD from Stenotrophomonas maltophilia (strain R551-3).